A 373-amino-acid chain; its full sequence is Eukaryotic translation initiation factor 3 subunit M (373 aa).

Ser2 is modified (N-acetylserine). Phosphoserine occurs at positions 2 and 152. The 159-residue stretch at 180 to 338 (AASKVMVELL…RKVVVSHSTH (159 aa)) folds into the PCI domain. Lys253 is modified (N6-acetyllysine). Ser366 bears the Phosphoserine mark.

It belongs to the eIF-3 subunit M family. As to quaternary structure, component of the eukaryotic translation initiation factor 3 (eIF-3) complex, which is composed of 13 subunits: EIF3A, EIF3B, EIF3C, EIF3D, EIF3E, EIF3F, EIF3G, EIF3H, EIF3I, EIF3J, EIF3K, EIF3L and EIF3M. The eIF-3 complex appears to include 3 stable modules: module A is composed of EIF3A, EIF3B, EIF3G and EIF3I; module B is composed of EIF3F, EIF3H, and EIF3M; and module C is composed of EIF3C, EIF3D, EIF3E, EIF3K and EIF3L. EIF3C of module C binds EIF3B of module A and EIF3H of module B, thereby linking the three modules. EIF3J is a labile subunit that binds to the eIF-3 complex via EIF3B. The eIF-3 complex interacts with RPS6KB1 under conditions of nutrient depletion. Mitogenic stimulation leads to binding and activation of a complex composed of MTOR and RPTOR, leading to phosphorylation and release of RPS6KB1 and binding of EIF4B to eIF-3.

It is found in the cytoplasm. In terms of biological role, component of the eukaryotic translation initiation factor 3 (eIF-3) complex, which is required for several steps in the initiation of protein synthesis. The eIF-3 complex associates with the 40S ribosome and facilitates the recruitment of eIF-1, eIF-1A, eIF-2:GTP:methionyl-tRNAi and eIF-5 to form the 43S pre-initiation complex (43S PIC). The eIF-3 complex stimulates mRNA recruitment to the 43S PIC and scanning of the mRNA for AUG recognition. The eIF-3 complex is also required for disassembly and recycling of post-termination ribosomal complexes and subsequently prevents premature joining of the 40S and 60S ribosomal subunits prior to initiation. The eIF-3 complex specifically targets and initiates translation of a subset of mRNAs involved in cell proliferation, including cell cycling, differentiation and apoptosis, and uses different modes of RNA stem-loop binding to exert either translational activation or repression. In Bos taurus (Bovine), this protein is Eukaryotic translation initiation factor 3 subunit M.